The following is a 258-amino-acid chain: Hemin import ATP-binding protein HmuV (258 aa).

The 241-residue stretch at 2–242 folds into the ABC transporter domain; it reads LTAEKLCVER…SKIEELYDFP (241 aa). 34–41 is a binding site for ATP; that stretch reads GANGAGKS.

It belongs to the ABC transporter superfamily. Heme (hemin) importer (TC 3.A.1.14.5) family. The complex is composed of two ATP-binding proteins (HmuV), two transmembrane proteins (HmuU) and a solute-binding protein (HmuT).

The protein resides in the cell inner membrane. In terms of biological role, part of the ABC transporter complex HmuTUV involved in hemin import. Responsible for energy coupling to the transport system. This is Hemin import ATP-binding protein HmuV from Hydrogenovibrio crunogenus (strain DSM 25203 / XCL-2) (Thiomicrospira crunogena).